Reading from the N-terminus, the 439-residue chain is 5-hydroxybenzimidazole synthase (439 aa).

Substrate-binding positions include M96, Y125, H164, 187–189 (SKG), 228–231 (NGIR), and E267. H271 is a Zn(2+) binding site. Y294 serves as a coordination point for substrate. Position 335 (H335) interacts with Zn(2+). [4Fe-4S] cluster-binding residues include C410, C413, and C417.

Belongs to the ThiC family. 5-hydroxybenzimidazole synthase subfamily. As to quaternary structure, homodimer. Requires [4Fe-4S] cluster as cofactor.

The enzyme catalyses 5-amino-1-(5-phospho-beta-D-ribosyl)imidazole + AH2 + S-adenosyl-L-methionine = 5-hydroxybenzimidazole + 5'-deoxyadenosine + formate + L-methionine + A + NH4(+) + phosphate + 2 H(+). In terms of biological role, catalyzes the conversion of aminoimidazole ribotide (AIR) to 5-hydroxybenzimidazole (5-HBI) in a radical S-adenosyl-L-methionine (SAM)-dependent reaction. Is thus involved in the anaerobic biosynthesis of the benzimidazole lower axial ligand of the cobamide produced by D.autotrophicum. The sequence is that of 5-hydroxybenzimidazole synthase from Desulforapulum autotrophicum (strain ATCC 43914 / DSM 3382 / VKM B-1955 / HRM2) (Desulfobacterium autotrophicum).